Reading from the N-terminus, the 74-residue chain is UPF0346 protein PEPE_1063 (74 aa).

This sequence belongs to the UPF0346 family.

This Pediococcus pentosaceus (strain ATCC 25745 / CCUG 21536 / LMG 10740 / 183-1w) protein is UPF0346 protein PEPE_1063.